The following is a 456-amino-acid chain: tRNA-2-methylthio-N(6)-dimethylallyladenosine synthase (456 aa).

Residues 18–134 (KKLFIETYGC…LPDLVASVEA (117 aa)) enclose the MTTase N-terminal domain. Cysteine 27, cysteine 63, cysteine 98, cysteine 172, cysteine 176, and cysteine 179 together coordinate [4Fe-4S] cluster. One can recognise a Radical SAM core domain in the interval 158-390 (CGNHISGFVS…IELQNRLSAE (233 aa)). In terms of domain architecture, TRAM spans 393–456 (ARDVGKTFEV…SATLKGEEVF (64 aa)).

Belongs to the methylthiotransferase family. MiaB subfamily. Monomer. Requires [4Fe-4S] cluster as cofactor.

It is found in the cytoplasm. It catalyses the reaction N(6)-dimethylallyladenosine(37) in tRNA + (sulfur carrier)-SH + AH2 + 2 S-adenosyl-L-methionine = 2-methylsulfanyl-N(6)-dimethylallyladenosine(37) in tRNA + (sulfur carrier)-H + 5'-deoxyadenosine + L-methionine + A + S-adenosyl-L-homocysteine + 2 H(+). Functionally, catalyzes the methylthiolation of N6-(dimethylallyl)adenosine (i(6)A), leading to the formation of 2-methylthio-N6-(dimethylallyl)adenosine (ms(2)i(6)A) at position 37 in tRNAs that read codons beginning with uridine. The protein is tRNA-2-methylthio-N(6)-dimethylallyladenosine synthase of Phocaeicola vulgatus (strain ATCC 8482 / DSM 1447 / JCM 5826 / CCUG 4940 / NBRC 14291 / NCTC 11154) (Bacteroides vulgatus).